Reading from the N-terminus, the 319-residue chain is Acetyl esterase (319 aa).

The Involved in the stabilization of the negatively charged intermediate by the formation of the oxyanion hole motif lies at His-91–Gly-93. Catalysis depends on residues Ser-165, Asp-262, and His-292.

It belongs to the 'GDXG' lipolytic enzyme family. As to quaternary structure, homodimer. Interacts with MalT and MelA.

Its subcellular location is the cytoplasm. In terms of biological role, displays esterase activity towards short chain fatty esters (acyl chain length of up to 8 carbons). Able to hydrolyze triacetylglycerol (triacetin) and tributyrylglycerol (tributyrin), but not trioleylglycerol (triolein) or cholesterol oleate. Negatively regulates MalT activity by antagonizing maltotriose binding. Inhibits MelA galactosidase activity. The sequence is that of Acetyl esterase from Escherichia coli O127:H6 (strain E2348/69 / EPEC).